The primary structure comprises 133 residues: Small ribosomal subunit protein uS8 (133 aa).

The segment at 1–29 is disordered; it reads MANHDPISDMLTRIRNASEKRHETTRIPA. Positions 16–25 are enriched in basic and acidic residues; the sequence is NASEKRHETT.

Belongs to the universal ribosomal protein uS8 family. As to quaternary structure, part of the 30S ribosomal subunit. Contacts proteins S5 and S12.

In terms of biological role, one of the primary rRNA binding proteins, it binds directly to 16S rRNA central domain where it helps coordinate assembly of the platform of the 30S subunit. The chain is Small ribosomal subunit protein uS8 from Prochlorococcus marinus (strain MIT 9211).